We begin with the raw amino-acid sequence, 280 residues long: uncharacterized protein (280 aa).

Residues 1–21 (MRPAIKVGLSTASVYPLRAEA) form the signal peptide.

The protein to M.leprae ML2432 and S.coelicolor SCO3347.

This is an uncharacterized protein from Mycobacterium tuberculosis (strain CDC 1551 / Oshkosh).